A 519-amino-acid chain; its full sequence is Signal transduction histidine-protein kinase/phosphatase MprB (519 aa).

At 1-26 the chain is on the cytoplasmic side; that stretch reads MVRFAWRRRASLRATSSLSLRWRVML. Residues 27 to 47 traverse the membrane as a helical segment; the sequence is LAMSMVAMVVVLMAFAVYVVI. Residues 48-163 lie on the Extracellular side of the membrane; the sequence is SAALYSDIDN…PTEAVMTKLR (116 aa). The helical transmembrane segment at 164–184 threads the bilayer; it reads WVLLIVGSLGVAVAAVAGGMV. The Cytoplasmic segment spans residues 185–519; sequence TRAGLRPVGR…SVDYQSARAR (335 aa). An HAMP domain is found at 186–238; sequence RAGLRPVGRLTEAAERVARTDDLRPIPVFGSDELARLTEAFNLMLRALAESRE. The region spanning 246-466 is the Histidine kinase domain; that stretch reads DAGHELRTPL…SIYVLLPGRP (221 aa). Residue histidine 249 is modified to Phosphohistidine; by autocatalysis.

Mg(2+) serves as cofactor. It depends on Mn(2+) as a cofactor. Autophosphorylated.

The protein localises to the cell membrane. The enzyme catalyses ATP + protein L-histidine = ADP + protein N-phospho-L-histidine.. Functionally, member of the two-component regulatory system MprB/MprA which contributes to maintaining a balance among several systems involved in stress resistance and is required for establishment and maintenance of persistent infection in the host. In response to environmental signals MprB acts both as a membrane-associated protein kinase that undergoes autophosphorylation and subsequently transfers the phosphate to MprA, and a protein phosphatase that dephosphorylates phospho-MprA. This chain is Signal transduction histidine-protein kinase/phosphatase MprB (mprB), found in Mycobacterium leprae (strain TN).